Reading from the N-terminus, the 892-residue chain is DNA mismatch repair protein MutS (892 aa).

An ATP-binding site is contributed by Gly607 to Ser614.

The protein belongs to the DNA mismatch repair MutS family.

In terms of biological role, this protein is involved in the repair of mismatches in DNA. It is possible that it carries out the mismatch recognition step. This protein has a weak ATPase activity. This Bacillus cereus (strain AH820) protein is DNA mismatch repair protein MutS.